Here is a 337-residue protein sequence, read N- to C-terminus: G-protein coupled receptor 26 (337 aa).

The Extracellular portion of the chain corresponds to 1–10; the sequence is MNSWDAGLAG. The chain crosses the membrane as a helical span at residues 11-31; that stretch reads LLVGTMGVSLLSNALVLLCLL. The Cytoplasmic portion of the chain corresponds to 32-47; sequence HSADIRRQAPALFTLN. A helical transmembrane segment spans residues 48–68; that stretch reads LTCGNLLCTVVNMPLTLAGVV. Topologically, residues 69-81 are extracellular; that stretch reads AQRQPAGDRLCRL. A disulfide bridge connects residues cysteine 79 and cysteine 156. Residues 82–102 form a helical membrane-spanning segment; sequence AAFLDTFLAANSMLSMAALSI. Residues 103–123 are Cytoplasmic-facing; that stretch reads DRWVAVVFPLSYRAKMRLRDA. A helical transmembrane segment spans residues 124–144; the sequence is ALMVAYTWLHALTFPAAALAL. At 145–168 the chain is on the extracellular side; sequence SWLGFHQLYASCTLCSRRPDERLR. A helical transmembrane segment spans residues 169–189; that stretch reads FAVFTGAFHALSFLLSFVVLC. Residues 190-245 are Cytoplasmic-facing; that stretch reads CTYLKVLKVARFHCKRIDVITMQTLVLLVDLHPSVRERCLEEQKRRRQRATKKIST. The helical transmembrane segment at 246–266 threads the bilayer; it reads FIGTFLVCFAPYVITRLVELF. At 267-276 the chain is on the extracellular side; it reads STVPIGSHWG. A helical transmembrane segment spans residues 277–297; it reads VLSKCLAYSKAASDPFVYSLL. Over 298-337 the chain is Cytoplasmic; it reads RHQYRKSCKEILNRLLHRRSIHSSGLTGDSHSQNILPVSE.

Belongs to the G-protein coupled receptor 1 family. Highly expressed in the CNS, the highest expression is seen in the amygdala, hippocampus and thalamus. Weak expression is detected in testis. Down-regulated in glioblastoma.

Its subcellular location is the cell membrane. In terms of biological role, orphan receptor. Displays a significant level of constitutive activity. Its effect is mediated by G(s)-alpha protein that stimulate adenylate cyclase, resulting in an elevation of intracellular cAMP. This Homo sapiens (Human) protein is G-protein coupled receptor 26 (GPR26).